Reading from the N-terminus, the 359-residue chain is UDP-3-O-acylglucosamine N-acyltransferase (359 aa).

His-248 serves as the catalytic Proton acceptor.

It belongs to the transferase hexapeptide repeat family. LpxD subfamily. Homotrimer.

The catalysed reaction is a UDP-3-O-[(3R)-3-hydroxyacyl]-alpha-D-glucosamine + a (3R)-hydroxyacyl-[ACP] = a UDP-2-N,3-O-bis[(3R)-3-hydroxyacyl]-alpha-D-glucosamine + holo-[ACP] + H(+). Its pathway is bacterial outer membrane biogenesis; LPS lipid A biosynthesis. Its function is as follows. Catalyzes the N-acylation of UDP-3-O-acylglucosamine using 3-hydroxyacyl-ACP as the acyl donor. Is involved in the biosynthesis of lipid A, a phosphorylated glycolipid that anchors the lipopolysaccharide to the outer membrane of the cell. In Chlamydia abortus (strain DSM 27085 / S26/3) (Chlamydophila abortus), this protein is UDP-3-O-acylglucosamine N-acyltransferase.